The chain runs to 689 residues: DNA ligase (689 aa).

NAD(+) is bound by residues 35–39, 84–85, and Glu-122; these read DEVYD and SL. The active-site N6-AMP-lysine intermediate is the Lys-124. Residues Arg-145, Glu-182, Lys-308, and Lys-332 each coordinate NAD(+). Zn(2+) contacts are provided by Cys-426, Cys-429, Cys-444, and Cys-449. Residues 612–689 form the BRCT domain; it reads TTEKSLNGKR…NETELIQMCR (78 aa).

Belongs to the NAD-dependent DNA ligase family. LigA subfamily. It depends on Mg(2+) as a cofactor. Mn(2+) serves as cofactor.

It catalyses the reaction NAD(+) + (deoxyribonucleotide)n-3'-hydroxyl + 5'-phospho-(deoxyribonucleotide)m = (deoxyribonucleotide)n+m + AMP + beta-nicotinamide D-nucleotide.. Its function is as follows. DNA ligase that catalyzes the formation of phosphodiester linkages between 5'-phosphoryl and 3'-hydroxyl groups in double-stranded DNA using NAD as a coenzyme and as the energy source for the reaction. It is essential for DNA replication and repair of damaged DNA. In Thermosynechococcus vestitus (strain NIES-2133 / IAM M-273 / BP-1), this protein is DNA ligase.